The following is a 30-amino-acid chain: Brevinin-2Rj (30 aa).

An intrachain disulfide couples Cys24 to Cys30.

Expressed by the skin glands.

Its subcellular location is the secreted. In terms of biological role, antimicrobial peptide. This Pelophylax ridibundus (Marsh frog) protein is Brevinin-2Rj.